The primary structure comprises 353 residues: Photosystem II protein D1 (353 aa).

Threonine 2 bears the N-acetylthreonine mark. Threonine 2 carries the post-translational modification Phosphothreonine. 3 helical membrane-spanning segments follow: residues 29-46 (YIGW…TAIS), 118-133 (HFLL…EWEL), and 142-156 (WIAV…AATA). Residue histidine 118 participates in chlorophyll a binding. Tyrosine 126 is a binding site for pheophytin a. [CaMn4O5] cluster contacts are provided by aspartate 170 and glutamate 189. Residues 197-218 (FHMLGVAGVFGGSLFSAMHGSL) traverse the membrane as a helical segment. Histidine 198 is a binding site for chlorophyll a. A quinone is bound by residues histidine 215 and 264-265 (SF). Fe cation is bound at residue histidine 215. Histidine 272 is a Fe cation binding site. A helical membrane pass occupies residues 274-288 (FLAVWPVVGIWFTAM). Histidine 332, glutamate 333, aspartate 342, and alanine 344 together coordinate [CaMn4O5] cluster. The propeptide occupies 345–353 (SVEAPAVNG).

Belongs to the reaction center PufL/M/PsbA/D family. PSII is composed of 1 copy each of membrane proteins PsbA, PsbB, PsbC, PsbD, PsbE, PsbF, PsbH, PsbI, PsbJ, PsbK, PsbL, PsbM, PsbT, PsbX, PsbY, PsbZ, Psb30/Ycf12, at least 3 peripheral proteins of the oxygen-evolving complex and a large number of cofactors. It forms dimeric complexes. The D1/D2 heterodimer binds P680, chlorophylls that are the primary electron donor of PSII, and subsequent electron acceptors. It shares a non-heme iron and each subunit binds pheophytin, quinone, additional chlorophylls, carotenoids and lipids. D1 provides most of the ligands for the Mn4-Ca-O5 cluster of the oxygen-evolving complex (OEC). There is also a Cl(-1) ion associated with D1 and D2, which is required for oxygen evolution. The PSII complex binds additional chlorophylls, carotenoids and specific lipids. is required as a cofactor. Post-translationally, tyr-161 forms a radical intermediate that is referred to as redox-active TyrZ, YZ or Y-Z. C-terminally processed by CTPA; processing is essential to allow assembly of the oxygen-evolving complex and thus photosynthetic growth.

Its subcellular location is the plastid. The protein resides in the chloroplast thylakoid membrane. The enzyme catalyses 2 a plastoquinone + 4 hnu + 2 H2O = 2 a plastoquinol + O2. Functionally, photosystem II (PSII) is a light-driven water:plastoquinone oxidoreductase that uses light energy to abstract electrons from H(2)O, generating O(2) and a proton gradient subsequently used for ATP formation. It consists of a core antenna complex that captures photons, and an electron transfer chain that converts photonic excitation into a charge separation. The D1/D2 (PsbA/PsbD) reaction center heterodimer binds P680, the primary electron donor of PSII as well as several subsequent electron acceptors. The protein is Photosystem II protein D1 of Mesostigma viride (Green alga).